The primary structure comprises 592 residues: Testis-specific serine kinase substrate (592 aa).

Position 217 is a phosphoserine (S217). Residues 232–308 (QDETPRRQEA…VPAGWGMGPR (77 aa)) are disordered. A compositionally biased stretch (basic and acidic residues) spans 234-264 (ETPRRQEAELQEPEEKQEPEEKQEPEEKQKP). A compositionally biased stretch (polar residues) spans 269–281 (SWNSLGPAATSQG). A Phosphoserine; by TSSK1 and TSSK2 modification is found at S288. The residue at position 316 (S316) is a Phosphoserine. Positions 566 to 592 (LEGSTGTMGGGSSAGTPPKQGGSAPEQ) are disordered.

Post-translationally, phosphorylated on serine residue(s) by STK22A/TSSK1 and STK22B/TSSK2. Highly expressed in testis. Expressed at low levels in prostate, female breast, placenta, ovary and thymus.

Its subcellular location is the cytoplasm. The protein resides in the cytoskeleton. It is found in the microtubule organizing center. It localises to the centrosome. The protein localises to the centriole. May play a role in testicular physiology, most probably in the process of spermatogenesis or spermatid development. This Homo sapiens (Human) protein is Testis-specific serine kinase substrate (TSKS).